Consider the following 488-residue polypeptide: Cysteine--tRNA ligase (488 aa).

Cys40 provides a ligand contact to Zn(2+). A 'HIGH' region motif is present at residues 42-52 (MTVYDYCHIGH). The Zn(2+) site is built by Cys221, His246, and Glu250. A 'KMSKS' region motif is present at residues 278 to 282 (KMSKS). Lys281 is a binding site for ATP.

The protein belongs to the class-I aminoacyl-tRNA synthetase family. In terms of assembly, monomer. Zn(2+) serves as cofactor.

The protein localises to the cytoplasm. It carries out the reaction tRNA(Cys) + L-cysteine + ATP = L-cysteinyl-tRNA(Cys) + AMP + diphosphate. The protein is Cysteine--tRNA ligase of Psychrobacter cryohalolentis (strain ATCC BAA-1226 / DSM 17306 / VKM B-2378 / K5).